The chain runs to 1888 residues: Protein mms22 (1888 aa).

Disordered stretches follow at residues 12–34 (DSQD…RGNE), 151–258 (FSSD…ISSN), and 316–354 (RRKL…SRFD). 3 stretches are compositionally biased toward polar residues: residues 13 to 32 (SQDS…SQRG), 212 to 227 (SNLN…SSTI), and 338 to 348 (SDNSISTPTPT).

It belongs to the MMS22 family.

The protein resides in the nucleus. Its function is as follows. Involved in protection against replication-dependent DNA damage. May act by restoring active replication forks, repairing unusual DNA structures, and/or preventing aberrant DNA rearrangement at arrested replication forks. The sequence is that of Protein mms22 (mus7) from Schizosaccharomyces pombe (strain 972 / ATCC 24843) (Fission yeast).